The following is a 570-amino-acid chain: Putative diflavin flavoprotein A 5 (570 aa).

Residues 38-231 (ERGTTSNSYV…LQVRLYAVGH (194 aa)) are zinc metallo-hydrolase. In terms of domain architecture, Flavodoxin-like spans 260-402 (VALLYASAYG…VGTDFAQTLK (143 aa)). The flavodoxin-reductase-like stretch occupies residues 421-570 (VGRIVGSVCV…INHRKTGNHY (150 aa)).

This sequence in the N-terminal section; belongs to the zinc metallo-hydrolase group 3 family. In the C-terminal section; belongs to the flavodoxin reductase family. It depends on Fe cation as a cofactor.

Its function is as follows. Mediates electron transfer from NADH to oxygen, reducing it to water. This modular protein has 3 redox cofactors, in other organisms the same activity requires 2 or 3 proteins. This is Putative diflavin flavoprotein A 5 (dfa5) from Nostoc sp. (strain PCC 7120 / SAG 25.82 / UTEX 2576).